The primary structure comprises 133 residues: Putative esterase STK_17900 (133 aa).

The protein belongs to the thioesterase PaaI family.

The protein is Putative esterase STK_17900 of Sulfurisphaera tokodaii (strain DSM 16993 / JCM 10545 / NBRC 100140 / 7) (Sulfolobus tokodaii).